Reading from the N-terminus, the 266-residue chain is Vitamin B12-binding protein (266 aa).

The N-terminal stretch at 1-22 (MAKSLFRALVALSFLAPLWLNA) is a signal peptide. In terms of domain architecture, Fe/B12 periplasmic-binding spans 25 to 266 (RVITLSPANT…QLCNALSQVD (242 aa)). Cyanocob(III)alamin contacts are provided by residues tyrosine 50 and 242–246 (DWFER). Cysteine 183 and cysteine 259 form a disulfide bridge.

The protein belongs to the BtuF family. As to quaternary structure, the complex is composed of two ATP-binding proteins (BtuD), two transmembrane proteins (BtuC) and a solute-binding protein (BtuF).

The protein localises to the periplasm. In terms of biological role, part of the ABC transporter complex BtuCDF involved in vitamin B12 import. Binds vitamin B12 and delivers it to the periplasmic surface of BtuC. The sequence is that of Vitamin B12-binding protein from Escherichia coli O6:H1 (strain CFT073 / ATCC 700928 / UPEC).